The primary structure comprises 215 residues: Transmembrane emp24 domain-containing protein 11 (215 aa).

Positions 1-17 (MQIQTILLCFSFSFSAA) are cleaved as a signal peptide. Residues 18 to 167 (FYFHAGEREE…ILKEQDYQRD (150 aa)) are Lumenal-facing. Residues 27–125 (EKCIIEDIPS…KLRIHLDIRV (99 aa)) enclose the GOLD domain. N105 carries an N-linked (GlcNAc...) asparagine glycan. Positions 136-171 (QAKDKVNEVTFKLQHLIEQVEQILKEQDYQRDREEN) form a coiled coil. The chain crosses the membrane as a helical span at residues 168 to 185 (REENFRITSEDTNRNVLW). The Cytoplasmic portion of the chain corresponds to 186-215 (WAFAQILIFISVGIFQMKHLKDFFIAKKLV). The short motif at 208 to 209 (FF) is the COPII vesicle coat-binding element. The COPI vesicle coat-binding signature appears at 208–215 (FFIAKKLV).

The protein belongs to the EMP24/GP25L family.

The protein localises to the endoplasmic reticulum membrane. Its function is as follows. Part of a complex whose function is to bind Ca(2+) to the ER membrane and thereby regulate the retention of ER resident proteins. This is Transmembrane emp24 domain-containing protein 11 (Tmed11) from Mus musculus (Mouse).